The primary structure comprises 411 residues: Peptidase T (411 aa).

Position 78 (His78) interacts with Zn(2+). Asp80 is a catalytic residue. Asp140 contributes to the Zn(2+) binding site. The active-site Proton acceptor is Glu173. Positions 174, 196, and 379 each coordinate Zn(2+).

It belongs to the peptidase M20B family. Zn(2+) is required as a cofactor.

Its subcellular location is the cytoplasm. It carries out the reaction Release of the N-terminal residue from a tripeptide.. In terms of biological role, cleaves the N-terminal amino acid of tripeptides. The protein is Peptidase T of Yersinia pseudotuberculosis serotype O:3 (strain YPIII).